Here is a 213-residue protein sequence, read N- to C-terminus: ATP synthase peripheral stalk subunit OSCP, mitochondrial (213 aa).

A mitochondrion-targeting transit peptide spans 1–23; it reads MAAPAVSGFSRQVRCFSTSVVRP. An SIFI-degron motif is present at residues 5–23; sequence AVSGFSRQVRCFSTSVVRP. An N6-acetyllysine mark is found at K54, K60, K70, and K73. K90 is modified (N6-succinyllysine). An N6-acetyllysine; alternate mark is found at K100 and K158. N6-succinyllysine; alternate is present on residues K100 and K158. N6-acetyllysine is present on residues K172, K176, and K192. K199 carries the N6-succinyllysine modification.

It belongs to the ATPase delta chain family. As to quaternary structure, component of the ATP synthase complex composed at least of ATP5F1A/subunit alpha, ATP5F1B/subunit beta, ATP5MC1/subunit c (homooctomer), MT-ATP6/subunit a, MT-ATP8/subunit 8, ATP5ME/subunit e, ATP5MF/subunit f, ATP5MG/subunit g, ATP5MK/subunit k, ATP5MJ/subunit j, ATP5F1C/subunit gamma, ATP5F1D/subunit delta, ATP5F1E/subunit epsilon, ATP5PF/subunit F6, ATP5PB/subunit b, ATP5PD/subunit d, ATP5PO/subunit OSCP. ATP synthase complex consists of a soluble F(1) head domain (subunits alpha(3) and beta(3)) - the catalytic core - and a membrane F(0) domain - the membrane proton channel (subunits c, a, 8, e, f, g, k and j). These two domains are linked by a central stalk (subunits gamma, delta, and epsilon) rotating inside the F1 region and a stationary peripheral stalk (subunits F6, b, d, and OSCP). Post-translationally, in response to mitochondrial stress, the precursor protein is ubiquitinated by the SIFI complex in the cytoplasm before mitochondrial import, leading to its degradation. Within the SIFI complex, UBR4 initiates ubiquitin chain that are further elongated or branched by KCMF1.

It is found in the mitochondrion. The protein resides in the mitochondrion inner membrane. In terms of biological role, subunit OSCP, of the mitochondrial membrane ATP synthase complex (F(1)F(0) ATP synthase or Complex V) that produces ATP from ADP in the presence of a proton gradient across the membrane which is generated by electron transport complexes of the respiratory chain. ATP synthase complex consist of a soluble F(1) head domain - the catalytic core - and a membrane F(1) domain - the membrane proton channel. These two domains are linked by a central stalk rotating inside the F(1) region and a stationary peripheral stalk. During catalysis, ATP synthesis in the catalytic domain of F(1) is coupled via a rotary mechanism of the central stalk subunits to proton translocation. In vivo, can only synthesize ATP although its ATP hydrolase activity can be activated artificially in vitro. Part of the complex F(0) domain. Part of the complex F(0) domain and the peripheric stalk, which acts as a stator to hold the catalytic alpha(3)beta(3) subcomplex and subunit a/ATP6 static relative to the rotary elements. The polypeptide is ATP synthase peripheral stalk subunit OSCP, mitochondrial (Rhinolophus ferrumequinum (Greater horseshoe bat)).